The following is a 201-amino-acid chain: tRNA (guanine-N(7)-)-methyltransferase (201 aa).

Residues glutamate 33, glutamate 58, aspartate 85, and aspartate 108 each coordinate S-adenosyl-L-methionine. Aspartate 108 is a catalytic residue. Residues lysine 112 and aspartate 144 each coordinate substrate.

This sequence belongs to the class I-like SAM-binding methyltransferase superfamily. TrmB family.

It catalyses the reaction guanosine(46) in tRNA + S-adenosyl-L-methionine = N(7)-methylguanosine(46) in tRNA + S-adenosyl-L-homocysteine. It functions in the pathway tRNA modification; N(7)-methylguanine-tRNA biosynthesis. Catalyzes the formation of N(7)-methylguanine at position 46 (m7G46) in tRNA. The sequence is that of tRNA (guanine-N(7)-)-methyltransferase from Anaeromyxobacter dehalogenans (strain 2CP-C).